A 361-amino-acid polypeptide reads, in one-letter code: Solute carrier family 25 member 3 (361 aa).

A mitochondrion-targeting transit peptide spans 1–49 (MFSSVAHLARANPFNTPHLQLVHDGLGDFRSRPPGPTGQPRRPRNLAAA). The tract at residues 25 to 44 (GLGDFRSRPPGPTGQPRRPR) is disordered. Over 50-62 (AVEEYSCEFGSAK) the chain is Mitochondrial intermembrane. Solcar repeat units follow at residues 62–146 (KYYA…FKVL), 159–243 (WRTS…TVEA), and 260–338 (EQLV…VKVY). Residues 63-85 (YYALCGFGGVLSCGLTHTAVVPL) traverse the membrane as a helical segment. Residues 86–120 (DLVKCRMQVDPQKYKGIFNGFSVTLKEDGVRGLAK) lie on the Mitochondrial matrix side of the membrane. N6-acetyllysine is present on lysine 98. Lysine 111 is modified (N6-methyllysine). The chain crosses the membrane as a helical span at residues 121–140 (GWAPTFLGYSMQGLCKFGFY). Topologically, residues 141–160 (EVFKVLYSNMLGEENTYLWR) are mitochondrial intermembrane. The chain crosses the membrane as a helical span at residues 161-182 (TSLYLAASASAEFFADIALAPM). Residues 183 to 217 (EAAKVRIQTQPGYANTLRDAAPKMYKEEGLKAFYK) are Mitochondrial matrix-facing. At tyrosine 195 the chain carries Phosphotyrosine. Residue lysine 208 is modified to N6-acetyllysine. Residues 218 to 237 (GVAPLWMRQIPYTMMKFACF) form a helical membrane-spanning segment. Topologically, residues 238 to 260 (ERTVEALYKFVVPKPRSECSKPE) are mitochondrial intermembrane. A helical membrane pass occupies residues 261 to 283 (QLVVTFVAGYIAGVFCAIVSHPA). The Mitochondrial matrix portion of the chain corresponds to 284–313 (DSVVSVLNKEKGSSASLVLKRLGFKGVWKG). Residues 314-332 (LFARIIMIGTLTALQWFIY) traverse the membrane as a helical segment. The Mitochondrial intermembrane segment spans residues 333–361 (DSVKVYFRLPRPPPPEMPESLKKKLGLTQ).

It belongs to the mitochondrial carrier (TC 2.A.29) family. As to quaternary structure, interacts with PPIF; the interaction is impaired by CsA.

Its subcellular location is the mitochondrion inner membrane. It catalyses the reaction phosphate(in) + H(+)(in) = phosphate(out) + H(+)(out). Its function is as follows. Inorganic ion transporter that transports phosphate or copper ions across the mitochondrial inner membrane into the matrix compartment. Mediates proton-coupled symport of phosphate ions necessary for mitochondrial oxidative phosphorylation of ADP to ATP. Transports copper ions probably in the form of anionic copper(I) complexes to maintain mitochondrial matrix copper pool and to supply copper for cytochrome C oxidase complex assembly. May also play a role in regulation of the mitochondrial permeability transition pore (mPTP). This Pongo abelii (Sumatran orangutan) protein is Solute carrier family 25 member 3.